The sequence spans 685 residues: Sodium-dependent phosphate transporter 1-A (685 aa).

The next 6 helical transmembrane spans lie at 21–41 (IMAPYLWMLVLGFVIAFVLAF), 66–86 (ACILASIFETVGSVLLGAKVS), 106–126 (LMAGSISAMFGSAVWQLAASF), 162–182 (IVLSWFISPLLSGIMSALLFL), 207–227 (ACTIGINLFSIMFTGAPLLGF), and 234–254 (GIILISVGCAVLCALIVWFVV). Disordered regions lie at residues 438-458 (RNRDTEARPDEAEKSTVHGAD) and 483-513 (EAEEQEEGSVEDVETDRKSSSSSLEERHDQD). Residues 483–496 (EAEEQEEGSVEDVE) show a composition bias toward acidic residues. A compositionally biased stretch (basic and acidic residues) spans 497–513 (TDRKSSSSSLEERHDQD). Transmembrane regions (helical) follow at residues 517-537 (VSLLFQFLQILTACFGSFAHG), 565-585 (ATPIWLLLYGGIGICIGLWVW), 606-626 (FSIELASALTVVIASNVGLPI), and 656-676 (IFLAWFVTVPISGLISAGIMA).

This sequence belongs to the inorganic phosphate transporter (PiT) (TC 2.A.20) family.

Its subcellular location is the membrane. In terms of biological role, sodium-phosphate symporter which plays a fundamental housekeeping role in phosphate transport. The protein is Sodium-dependent phosphate transporter 1-A (slc20a1-a) of Xenopus laevis (African clawed frog).